A 404-amino-acid polypeptide reads, in one-letter code: Phosphopentomutase (404 aa).

The Mn(2+) site is built by aspartate 10, aspartate 303, histidine 308, aspartate 344, histidine 345, and histidine 356.

The protein belongs to the phosphopentomutase family. Mn(2+) is required as a cofactor.

The protein localises to the cytoplasm. It carries out the reaction 2-deoxy-alpha-D-ribose 1-phosphate = 2-deoxy-D-ribose 5-phosphate. The enzyme catalyses alpha-D-ribose 1-phosphate = D-ribose 5-phosphate. It functions in the pathway carbohydrate degradation; 2-deoxy-D-ribose 1-phosphate degradation; D-glyceraldehyde 3-phosphate and acetaldehyde from 2-deoxy-alpha-D-ribose 1-phosphate: step 1/2. Functionally, isomerase that catalyzes the conversion of deoxy-ribose 1-phosphate (dRib-1-P) and ribose 1-phosphate (Rib-1-P) to deoxy-ribose 5-phosphate (dRib-5-P) and ribose 5-phosphate (Rib-5-P), respectively. The protein is Phosphopentomutase of Shewanella putrefaciens (strain CN-32 / ATCC BAA-453).